The sequence spans 68 residues: Beta-defensin 1 (68 aa).

An N-terminal signal peptide occupies residues 1 to 21 (MRTSYLLLFTLCLLLSEMASG). The propeptide occupies 22–32 (DNFLTGLGHRS). Cystine bridges form between C37–C66, C44–C59, and C49–C67.

This sequence belongs to the beta-defensin family. As to quaternary structure, monomer. Homodimer.

The protein localises to the secreted. Its subcellular location is the membrane. Its function is as follows. Has bactericidal activity. May act as a ligand for C-C chemokine receptor CCR6. Positively regulates the sperm motility and bactericidal activity in a CCR6-dependent manner. Binds to CCR6 and triggers Ca2+ mobilization in the sperm which is important for its motility. This Hylobates moloch (Silvery gibbon) protein is Beta-defensin 1 (DEFB1).